Reading from the N-terminus, the 131-residue chain is Translation initiation factor 5A (131 aa).

The residue at position 36 (lysine 36) is a Hypusine.

The protein belongs to the eIF-5A family.

It localises to the cytoplasm. In terms of biological role, functions by promoting the formation of the first peptide bond. The protein is Translation initiation factor 5A of Saccharolobus solfataricus (strain ATCC 35092 / DSM 1617 / JCM 11322 / P2) (Sulfolobus solfataricus).